The primary structure comprises 337 residues: RNA 3'-terminal phosphate cyclase (337 aa).

ATP-binding positions include Gln-101 and 282–285 (HMSD). His-306 acts as the Tele-AMP-histidine intermediate in catalysis.

The protein belongs to the RNA 3'-terminal cyclase family. Type 1 subfamily.

Its subcellular location is the cytoplasm. The enzyme catalyses a 3'-end 3'-phospho-ribonucleotide-RNA + ATP = a 3'-end 2',3'-cyclophospho-ribonucleotide-RNA + AMP + diphosphate. Its function is as follows. Catalyzes the conversion of 3'-phosphate to a 2',3'-cyclic phosphodiester at the end of RNA. The mechanism of action of the enzyme occurs in 3 steps: (A) adenylation of the enzyme by ATP; (B) transfer of adenylate to an RNA-N3'P to produce RNA-N3'PP5'A; (C) and attack of the adjacent 2'-hydroxyl on the 3'-phosphorus in the diester linkage to produce the cyclic end product. The biological role of this enzyme is unknown but it is likely to function in some aspects of cellular RNA processing. The protein is RNA 3'-terminal phosphate cyclase of Saccharolobus islandicus (strain L.S.2.15 / Lassen #1) (Sulfolobus islandicus).